The sequence spans 104 residues: Complex III assembly factor LYRM7 (104 aa).

The residue at position 60 (Ser60) is a Phosphoserine.

It belongs to the complex I LYR family. Interacts with UQCRFS1.

It localises to the mitochondrion matrix. Its function is as follows. Assembly factor required for Rieske Fe-S protein UQCRFS1 incorporation into the cytochrome b-c1 (CIII) complex. Functions as a chaperone, binding to this subunit within the mitochondrial matrix and stabilizing it prior to its translocation and insertion into the late CIII dimeric intermediate within the mitochondrial inner membrane. The protein is Complex III assembly factor LYRM7 (LYRM7) of Pongo abelii (Sumatran orangutan).